A 160-amino-acid polypeptide reads, in one-letter code: Small ribosomal subunit protein uS19 (160 aa).

The segment at 1 to 27 is disordered; that stretch reads MARQKFSGKGGKGKSKKGQQSTAPRRR.

Belongs to the universal ribosomal protein uS19 family.

Functionally, protein S19 forms a complex with S13 that binds strongly to the 16S ribosomal RNA. The chain is Small ribosomal subunit protein uS19 from Methanococcus vannielii (strain ATCC 35089 / DSM 1224 / JCM 13029 / OCM 148 / SB).